The following is a 1333-amino-acid chain: Inner capsid protein VP1 (1333 aa).

Positions 1–10 (MHSTTNNSNK) are enriched in polar residues. The disordered stretch occupies residues 1-93 (MHSTTNNSNK…MDMEKAAETT (93 aa)). The segment covering 11-20 (RNNEEKHKQP) has biased composition (basic and acidic residues). Polar residues predominate over residues 64–82 (DGASRSGTNAKVATASSAR).

The protein belongs to the turreted BTV-fold inner capsid family. Homodecamer; each decamer is made up of two conformers of VP2, called VP2A and VP2B. 12 homodecamers assemble to form an icosahedral capsid.

The protein resides in the virion. Functionally, inner capsid protein that self-assembles to form an icosahedral capsid with a T=2 symmetry, which consists of 120 copies of VP2, with channels at each of its five-fold vertices. This capsid constitutes the innermost concentric layer of the viral mature particle. The polypeptide is Inner capsid protein VP1 (S1) (Lymantria dispar cypovirus 1 (isolate Rao) (LdCPV-1)).